The following is an 80-amino-acid chain: Three-finger toxin MALT0059C (80 aa).

The first 21 residues, 1–21, serve as a signal peptide directing secretion; the sequence is MRTLLLTLVVVTIVCLDLGNS. 4 disulfide bridges follow: C24–C41, C35–C60, C64–C72, and C73–C78.

The protein belongs to the three-finger toxin family. Short-chain subfamily. As to expression, expressed by the venom gland.

It is found in the secreted. Functionally, neurotoxin. Blocks muscular nicotinic acetylcholine receptors (nAChR). This is Three-finger toxin MALT0059C from Micrurus altirostris (Uruguayan coral snake).